The following is a 223-amino-acid chain: Ribonuclease 3 (223 aa).

Residues leucine 5 to aspartate 127 enclose the RNase III domain. A Mg(2+)-binding site is contributed by glutamate 40. Residue aspartate 44 is part of the active site. Mg(2+) contacts are provided by aspartate 113 and glutamate 116. Glutamate 116 is an active-site residue. One can recognise a DRBM domain in the interval aspartate 154–asparagine 223.

The protein belongs to the ribonuclease III family. As to quaternary structure, homodimer. Mg(2+) serves as cofactor.

It localises to the cytoplasm. It catalyses the reaction Endonucleolytic cleavage to 5'-phosphomonoester.. Its function is as follows. Digests double-stranded RNA. Involved in the processing of primary rRNA transcript to yield the immediate precursors to the large and small rRNAs (23S and 16S). Processes some mRNAs, and tRNAs when they are encoded in the rRNA operon. Processes pre-crRNA and tracrRNA of type II CRISPR loci if present in the organism. The polypeptide is Ribonuclease 3 (Aliivibrio fischeri (strain ATCC 700601 / ES114) (Vibrio fischeri)).